Reading from the N-terminus, the 79-residue chain is Cyclin-dependent kinases regulatory subunit 2 (79 aa).

Lys4 is subject to N6-acetyllysine.

This sequence belongs to the CKS family. As to quaternary structure, forms a homohexamer that can probably bind six kinase subunits.

Its function is as follows. Binds to the catalytic subunit of the cyclin dependent kinases and is essential for their biological function. The protein is Cyclin-dependent kinases regulatory subunit 2 (Cks2) of Mus musculus (Mouse).